The chain runs to 204 residues: UPF0134 protein MPN_655 (204 aa).

The segment at 46–132 is disordered; that stretch reads EVENKPKIPI…FNEFKDSNNQ (87 aa). Residues 64–80 show a composition bias toward pro residues; sequence SPKPLKPPKPPKPPKGP. A compositionally biased stretch (basic and acidic residues) spans 117 to 132; it reads YVTRKEFNEFKDSNNQ.

This sequence belongs to the UPF0134 family.

The sequence is that of UPF0134 protein MPN_655 from Mycoplasma pneumoniae (strain ATCC 29342 / M129 / Subtype 1) (Mycoplasmoides pneumoniae).